The following is a 248-amino-acid chain: Probable transcriptional regulatory protein OCAR_7305/OCA5_c08120 (248 aa).

The protein belongs to the TACO1 family.

It is found in the cytoplasm. The polypeptide is Probable transcriptional regulatory protein OCAR_7305/OCA5_c08120 (Afipia carboxidovorans (strain ATCC 49405 / DSM 1227 / KCTC 32145 / OM5) (Oligotropha carboxidovorans)).